A 148-amino-acid chain; its full sequence is Aspartate carbamoyltransferase regulatory chain (148 aa).

Positions 106, 111, 134, and 137 each coordinate Zn(2+).

This sequence belongs to the PyrI family. In terms of assembly, contains catalytic and regulatory chains. It depends on Zn(2+) as a cofactor.

Functionally, involved in allosteric regulation of aspartate carbamoyltransferase. This Methanococcus maripaludis (strain C6 / ATCC BAA-1332) protein is Aspartate carbamoyltransferase regulatory chain.